The primary structure comprises 462 residues: Phospho-2-dehydro-3-deoxyheptonate aldolase AroG (462 aa).

C87 contributes to the Mn(2+) binding site. Residues R126, 283-284, K306, and R337 each bind phosphoenolpyruvate; that span reads ER. H369, E411, and D441 together coordinate Mn(2+).

As to quaternary structure, homodimer. Interacts with Rv0948c. Mn(2+) is required as a cofactor. The cofactor is Co(2+). It depends on Cd(2+) as a cofactor.

The catalysed reaction is D-erythrose 4-phosphate + phosphoenolpyruvate + H2O = 7-phospho-2-dehydro-3-deoxy-D-arabino-heptonate + phosphate. Its pathway is metabolic intermediate biosynthesis; chorismate biosynthesis; chorismate from D-erythrose 4-phosphate and phosphoenolpyruvate: step 1/7. With respect to regulation, feedback inhibited by tryptophan, tyrosine, phenylalanine and chorismate. Functionally, catalyzes an aldol-like condensation reaction between phosphoenolpyruvate (PEP) and D-erythrose 4-phosphate (E4P) to generate 3-deoxy-D-arabino-heptulosonate 7-phosphate (DAH7P) and inorganic phosphate. This Mycobacterium tuberculosis (strain ATCC 25618 / H37Rv) protein is Phospho-2-dehydro-3-deoxyheptonate aldolase AroG (aroG).